A 211-amino-acid chain; its full sequence is Thiamine-phosphate synthase (211 aa).

4-amino-2-methyl-5-(diphosphooxymethyl)pyrimidine contacts are provided by residues 44-48 and Asn-75; that span reads QYRNK. 2 residues coordinate Mg(2+): Asp-76 and Asp-95. Ser-114 contributes to the 4-amino-2-methyl-5-(diphosphooxymethyl)pyrimidine binding site. Position 140–142 (140–142) interacts with 2-[(2R,5Z)-2-carboxy-4-methylthiazol-5(2H)-ylidene]ethyl phosphate; sequence TKS. Lys-143 lines the 4-amino-2-methyl-5-(diphosphooxymethyl)pyrimidine pocket. Gly-171 serves as a coordination point for 2-[(2R,5Z)-2-carboxy-4-methylthiazol-5(2H)-ylidene]ethyl phosphate.

It belongs to the thiamine-phosphate synthase family. It depends on Mg(2+) as a cofactor.

It carries out the reaction 2-[(2R,5Z)-2-carboxy-4-methylthiazol-5(2H)-ylidene]ethyl phosphate + 4-amino-2-methyl-5-(diphosphooxymethyl)pyrimidine + 2 H(+) = thiamine phosphate + CO2 + diphosphate. It catalyses the reaction 2-(2-carboxy-4-methylthiazol-5-yl)ethyl phosphate + 4-amino-2-methyl-5-(diphosphooxymethyl)pyrimidine + 2 H(+) = thiamine phosphate + CO2 + diphosphate. The catalysed reaction is 4-methyl-5-(2-phosphooxyethyl)-thiazole + 4-amino-2-methyl-5-(diphosphooxymethyl)pyrimidine + H(+) = thiamine phosphate + diphosphate. It functions in the pathway cofactor biosynthesis; thiamine diphosphate biosynthesis; thiamine phosphate from 4-amino-2-methyl-5-diphosphomethylpyrimidine and 4-methyl-5-(2-phosphoethyl)-thiazole: step 1/1. In terms of biological role, condenses 4-methyl-5-(beta-hydroxyethyl)thiazole monophosphate (THZ-P) and 2-methyl-4-amino-5-hydroxymethyl pyrimidine pyrophosphate (HMP-PP) to form thiamine monophosphate (TMP). This Koribacter versatilis (strain Ellin345) protein is Thiamine-phosphate synthase.